The following is a 462-amino-acid chain: MSLCTLEINLSAIKNNYLLLQDICKTSLVGAAVKANGYGLGAVQISKALIEENCRHFFVASSEEGVNLRKALASWHESVFRHCEKNYTVIRRSNPVKNSVSQNFFNYFSGLQQCFAPRNDGSSIHATTPKALDNDVNILVLNGVFEHDALELIEYNLTPVLNNLKQIEIWQKFSNLKNRLLPCYLHFNTGINRLGLTHNEIEQLINNRDLLKGLDLQYIISHLAVSEEIDNPYNLEQLNRFKTYLQYFPNVKASLANSGGIFLGQDYHFDLARPGAALYGLNPVIDLSNNLSYKEEFEGDTERRTAAYINVREDSSTGSTYKLPLEGGYSRGLQNPVTLKAPIIHLQNLTLDSHIGYNMTFTTERDSVIATLPLGYADGFSRNFSNQGEVFINGRSVPIVGRISMDLINIDVTDLPPLDIFLGQEAEIIGNYCTPDKIASIIGTIGYEVLTSLGSRYKRIYK.

The active-site Proton acceptor; specific for D-alanine is the Lys-34. N6-(pyridoxal phosphate)lysine is present on Lys-34. A unknown insert region spans residues Ala-73 to Leu-132. Arg-193 serves as a coordination point for substrate. In terms of domain architecture, RPE1 insert spans Asp-286–Gly-332. Tyr-357 functions as the Proton acceptor; specific for L-alanine in the catalytic mechanism. Met-405 serves as a coordination point for substrate.

This sequence belongs to the alanine racemase family. Pyridoxal 5'-phosphate is required as a cofactor.

It catalyses the reaction L-alanine = D-alanine. It participates in amino-acid biosynthesis; D-alanine biosynthesis; D-alanine from L-alanine: step 1/1. Functionally, catalyzes the interconversion of L-alanine and D-alanine. May also act on other amino acids. This chain is Alanine racemase (alr), found in Rickettsia felis (strain ATCC VR-1525 / URRWXCal2) (Rickettsia azadi).